The chain runs to 288 residues: 2-dehydro-3-deoxyphosphooctonate aldolase (288 aa).

Belongs to the KdsA family.

The protein resides in the cytoplasm. The catalysed reaction is D-arabinose 5-phosphate + phosphoenolpyruvate + H2O = 3-deoxy-alpha-D-manno-2-octulosonate-8-phosphate + phosphate. Its pathway is carbohydrate biosynthesis; 3-deoxy-D-manno-octulosonate biosynthesis; 3-deoxy-D-manno-octulosonate from D-ribulose 5-phosphate: step 2/3. It participates in bacterial outer membrane biogenesis; lipopolysaccharide biosynthesis. This Bdellovibrio bacteriovorus (strain ATCC 15356 / DSM 50701 / NCIMB 9529 / HD100) protein is 2-dehydro-3-deoxyphosphooctonate aldolase.